The sequence spans 427 residues: UPF0761 membrane protein Plut_1323 (427 aa).

The next 6 membrane-spanning stretches (helical) occupy residues 51 to 71, 105 to 125, 147 to 167, 188 to 208, 221 to 241, and 251 to 271; these read LLSI…FAVF, TFTM…VLIS, FTLY…SLAA, LLSL…YLLV, GALV…FYVA, and GALS…VVVL.

The protein belongs to the UPF0761 family.

The protein resides in the cell inner membrane. The protein is UPF0761 membrane protein Plut_1323 of Chlorobium luteolum (strain DSM 273 / BCRC 81028 / 2530) (Pelodictyon luteolum).